A 314-amino-acid polypeptide reads, in one-letter code: MPVRIPDNLPAAGILESENIFVMSETRAANQDIRPMRVLILNLMPNKIETETQLLRLLGNTPLQVGVDLLRIHDKESKHTSVDHMNTFYRDFEDIRNNNYDGLIITGAPLGQIDFKDVVYWDHIREIIDWSQQHVTSVLFLCWAAHAGLYHLYDLHRQLLANKRSGVFNHRRTSDPHPLLRGFDDEFFAPHSRFAEMDIEQIRQHPDLEVLAESDEAGAYIVLSRDNHNVFVMGHPEYQKDTLNEEYVRDVGEGLNPDIPQNYYRQDDPTQDTIVRWHSHGSLLVSNWLNYYVYQLTPYDLSDMNAKTPWESKK.

The active-site Acyl-thioester intermediate is the C142. Residues K163 and S192 each contribute to the substrate site. The active-site Proton acceptor is the H235. Residue E237 is part of the active site. Position 249 (R249) interacts with substrate.

This sequence belongs to the MetA family.

The protein resides in the cytoplasm. The enzyme catalyses L-homoserine + succinyl-CoA = O-succinyl-L-homoserine + CoA. It functions in the pathway amino-acid biosynthesis; L-methionine biosynthesis via de novo pathway; O-succinyl-L-homoserine from L-homoserine: step 1/1. Its function is as follows. Transfers a succinyl group from succinyl-CoA to L-homoserine, forming succinyl-L-homoserine. The sequence is that of Homoserine O-succinyltransferase from Shewanella frigidimarina (strain NCIMB 400).